A 147-amino-acid polypeptide reads, in one-letter code: uncharacterized protein (147 aa).

Helical transmembrane passes span 42–62 and 64–84; these read WASL…SPEP and LILQ…ATAF.

The protein localises to the cell membrane. This is an uncharacterized protein from Bacillus subtilis (strain 168).